The primary structure comprises 153 residues: ORM1-like protein 3 (153 aa).

Residues 1–17 (MNVGTAHSEVNPNTRVM) are important for ceramide level-sensing. Topologically, residues 1–21 (MNVGTAHSEVNPNTRVMNSRG) are cytoplasmic. 2 consecutive transmembrane segments (helical) span residues 22–44 (IWLS…PFVS) and 45–63 (VPVV…MYIF). At 64-100 (LHTVKGTPFETPDQGKARLLTHWEQMDYGVQFTASRK) the chain is on the cytoplasmic side. A helical membrane pass occupies residues 101-117 (FLTITPIVLYFLTSFYT). The Lumenal segment spans residues 118–121 (KYDQ). A helical transmembrane segment spans residues 122–139 (IHFVLNTVSLMSVLIPKL). P137 bears the Hydroxyproline mark. Residues 140-153 (PQLHGVRIFGINKY) are Cytoplasmic-facing.

It belongs to the ORM family. As to quaternary structure, ceramide-sensitive subunit of the serine palmitoyltransferase (SPT) complex, which is also composed of SPTLC1, SPTLC2/3 and SPTSSA/B. In terms of processing, when hydroxylated at Pro-137, ubiquitinated via 'Lys-48'-linkage, leading to proteasomal degradation. In endothelial cells, ORMDL3 proteasomal degradation is controlled by the sphingosine 1-phosphate receptor signaling pathway. As to expression, widely expressed. Expressed in adult and fetal heart, brain, lung, liver, skeletal muscle and kidney. Expressed in adult pancreas and placenta and in fetal spleen and thymus.

The protein resides in the endoplasmic reticulum membrane. Plays an essential role in the homeostatic regulation of sphingolipid de novo biosynthesis by modulating the activity of the serine palmitoyltransferase (SPT) in response to ceramide levels. When complexed to SPT, the binding of ceramides to its N-terminus stabilizes a conformation that block SPT substrate entry, hence preventing SPT catalytic activity. Through this mechanism, maintains ceramide levels at sufficient concentrations for the production of complex sphingolipids, but which prevents the accumulation of ceramides to levels that trigger apoptosis. The sequence is that of ORM1-like protein 3 (ORMDL3) from Homo sapiens (Human).